We begin with the raw amino-acid sequence, 141 residues long: Large ribosomal subunit protein uL11 (141 aa).

The protein belongs to the universal ribosomal protein uL11 family. Part of the ribosomal stalk of the 50S ribosomal subunit. Interacts with L10 and the large rRNA to form the base of the stalk. L10 forms an elongated spine to which L12 dimers bind in a sequential fashion forming a multimeric L10(L12)X complex. In terms of processing, one or more lysine residues are methylated.

Functionally, forms part of the ribosomal stalk which helps the ribosome interact with GTP-bound translation factors. The chain is Large ribosomal subunit protein uL11 from Wolinella succinogenes (strain ATCC 29543 / DSM 1740 / CCUG 13145 / JCM 31913 / LMG 7466 / NCTC 11488 / FDC 602W) (Vibrio succinogenes).